The primary structure comprises 261 residues: Proteasome subunit alpha type-4 (261 aa).

Phosphoserine occurs at positions 13 and 75. Position 127 is an N6-acetyllysine (K127). S173 is subject to Phosphoserine. Position 176 is an N6-acetyllysine (K176). Residues 240 to 261 (HEEEEAKAEREKKEKEQKEKDK) are disordered.

It belongs to the peptidase T1A family. As to quaternary structure, the 26S proteasome consists of a 20S proteasome core and two 19S regulatory subunits. The 20S proteasome core is a barrel-shaped complex made of 28 subunits that are arranged in four stacked rings. The two outer rings are each formed by seven alpha subunits, and the two inner rings are formed by seven beta subunits. The proteolytic activity is exerted by three beta-subunits PSMB5, PSMB6 and PSMB7.

It is found in the cytoplasm. The protein resides in the nucleus. In terms of biological role, component of the 20S core proteasome complex involved in the proteolytic degradation of most intracellular proteins. This complex plays numerous essential roles within the cell by associating with different regulatory particles. Associated with two 19S regulatory particles, forms the 26S proteasome and thus participates in the ATP-dependent degradation of ubiquitinated proteins. The 26S proteasome plays a key role in the maintenance of protein homeostasis by removing misfolded or damaged proteins that could impair cellular functions, and by removing proteins whose functions are no longer required. Associated with the PA200 or PA28, the 20S proteasome mediates ubiquitin-independent protein degradation. This type of proteolysis is required in several pathways including spermatogenesis (20S-PA200 complex) or generation of a subset of MHC class I-presented antigenic peptides (20S-PA28 complex). This Macaca fascicularis (Crab-eating macaque) protein is Proteasome subunit alpha type-4 (PSMA4).